A 318-amino-acid chain; its full sequence is MTSAYDKLHSTLDVKAFGRVAVLYGGKSAEREVSLKSGAAVIDALTTAGVDVVAIDVGDDLLARLQSEEIDRAFIILHGRGGEDGSMQGLLECLGIPYTGSGILASALAMDKLRTKQVWQSLGIPTPRHAVLASESDCLQASTELGFPLIVKPAHEGSSIGMAKVNSAQELVAAWQDAAKYDSQVLVEQWIHGPEFTIAVLRGQVLPPIALGTPHVFYDYDAKYIANDTQYRIPCGLDSAKEQELIDLTARACDAIGIEGWGRLDVMQDEQGRFWLLEVNTAPGMTDHSLVPMAARAAGLDFQQLVLAILAESVATRG.

An ATP-grasp domain is found at 116–311 (KQVWQSLGIP…FQQLVLAILA (196 aa)). Position 142-197 (142-197 (STELGFPLIVKPAHEGSSIGMAKVNSAQELVAAWQDAAKYDSQVLVEQWIHGPEFT)) interacts with ATP. Mg(2+)-binding residues include D265, E278, and N280.

The protein belongs to the D-alanine--D-alanine ligase family. Mg(2+) is required as a cofactor. Mn(2+) serves as cofactor.

The protein localises to the cytoplasm. It carries out the reaction 2 D-alanine + ATP = D-alanyl-D-alanine + ADP + phosphate + H(+). It participates in cell wall biogenesis; peptidoglycan biosynthesis. Cell wall formation. The chain is D-alanine--D-alanine ligase from Pseudomonas putida (strain GB-1).